The primary structure comprises 41 residues: Large ribosomal subunit protein bL36 (41 aa).

This sequence belongs to the bacterial ribosomal protein bL36 family.

This is Large ribosomal subunit protein bL36 from Nitrobacter winogradskyi (strain ATCC 25391 / DSM 10237 / CIP 104748 / NCIMB 11846 / Nb-255).